Consider the following 909-residue polypeptide: WD repeat-containing protein 20 homolog (909 aa).

The segment at Ser-58 to Arg-132 is disordered. Composition is skewed to low complexity over residues Gly-80–Asn-107 and Ser-115–Asn-127. WD repeat units lie at residues Ile-248 to Ala-288, Thr-321 to Arg-362, Ser-363 to Arg-402, and Ala-470 to Pro-517. Disordered regions lie at residues Phe-458–Asp-483, Ser-554–Val-628, Ser-661–Ser-699, Ser-720–Arg-739, and Asn-749–Ser-775. Composition is skewed to polar residues over residues Gly-555–Pro-569 and Thr-595–Pro-606. 2 stretches are compositionally biased toward low complexity: residues Glu-612–Val-628 and Gly-673–Ser-699. One copy of the WD 5 repeat lies at Ile-856–Thr-893.

In terms of assembly, component of the Usp12-46 deubiquitylase complex consisting of Usp12-46, Wdr20 and Uaf1; regulatory subunit that, together with Uaf1, stabilizes Usp12-46. The Usp12-46 deubiquitylase complex associates with arr/arrow; the interaction leads to deubiquitination and stabilization of arr/arrow.

Functionally, regulatory component of the Usp12-46 deubiquitylase complex. This complex deubiquitylates the wg/wingless-signaling receptor arr/arrow, which stabilizes the receptor and increases its concentration at the cell surface; this enhances the sensitivity of cells to wg/wingless-signal stimulation. This increases the amplitude and spatial range of the signaling response to the wg/wingless morphogen gradient, facilitating the precise concentration-dependent regulation of its target genes. Required for wg/wingless-mediated signaling in the wing imaginal disc and for wg/wingless-dependent regulation of intestinal stem cell proliferation. The polypeptide is WD repeat-containing protein 20 homolog (Drosophila melanogaster (Fruit fly)).